A 202-amino-acid polypeptide reads, in one-letter code: Transcriptional regulator SdrP (202 aa).

An HTH crp-type domain is found at 117–189; that stretch reads QRLKNRMAAA…YGKIQLLDLK (73 aa). Residues 149-168 constitute a DNA-binding region (H-T-H motif); the sequence is HDELAAAVGSVRETVTKVIG.

In terms of assembly, homodimer.

In terms of biological role, activates transcription. The consensus DNA-binding site of this transcriptional regulator is 5'-WWGTGAN(5-7)ACACWW-3' in which W is A or T and N is G, A, T or C. Regulated genes include those encoding proteins involved in nutrient and energy supply, redox control and polyadenylation of mRNA. Also regulates genes involved in oxidative stress response such as genes encoding manganese superoxide dismutase and catalase, and genes encoding a protein involved in nucleotide excision repair of damaged DNA and putative proteins involved in redox control, protein degradation and transcriptional regulation. This chain is Transcriptional regulator SdrP, found in Thermus thermophilus (strain ATCC 27634 / DSM 579 / HB8).